The following is a 379-amino-acid chain: MKIIRKNHPLLKIINHSFIDLPTPSNISSWWNFGSLLGICLMIQILTGLFLAMHYTSDTTTAFSSVAHICRDVNYGWLIRYLHANGASMFFICLFIHVGRGIYYGSYVLSETWNIGIILFFTTMATAFVGYVLPWGQMSFWGATVITNLLSAIPYIGTTLVEWIWGGFSVDKATLTRFFAFHFILPFIITAFVLVHLLFLHETGSNNPSGLNSDSDKIPFHPYYTIKDLLGILLLLMALMILALFFPDVLGDPDNFTPANPLNTPAHIKPXWYFLFAYAILRSIPNKLGGVLALILSILILAAFPLLNTSKQHGLIYRPITQTIYWTFIANLLILTWIGGQPVKYPFTMXGXIASITYFIIIIILMPMSNTIENNIIKL.

Helical transmembrane passes span 33–53 (FGSLLGICLMIQILTGLFLAM), 77–98 (WLIRYLHANGASMFFICLFIHV), 113–133 (WNIGIILFFTTMATAFVGYVL), and 178–198 (FFAFHFILPFIITAFVLVHLL). Histidine 83 and histidine 97 together coordinate heme b. Residues histidine 182 and histidine 196 each contribute to the heme b site. Position 201 (histidine 201) interacts with a ubiquinone. Transmembrane regions (helical) follow at residues 226–246 (IKDLLGILLLLMALMILALFF), 288–308 (LGGVLALILSILILAAFPLLN), 320–340 (ITQTIYWTFIANLLILTWIGG), and 347–367 (FTMXGXIASITYFIIIIILMP).

It belongs to the cytochrome b family. As to quaternary structure, the cytochrome bc1 complex contains 11 subunits: 3 respiratory subunits (MT-CYB, CYC1 and UQCRFS1), 2 core proteins (UQCRC1 and UQCRC2) and 6 low-molecular weight proteins (UQCRH/QCR6, UQCRB/QCR7, UQCRQ/QCR8, UQCR10/QCR9, UQCR11/QCR10 and a cleavage product of UQCRFS1). This cytochrome bc1 complex then forms a dimer. It depends on heme b as a cofactor.

The protein resides in the mitochondrion inner membrane. Component of the ubiquinol-cytochrome c reductase complex (complex III or cytochrome b-c1 complex) that is part of the mitochondrial respiratory chain. The b-c1 complex mediates electron transfer from ubiquinol to cytochrome c. Contributes to the generation of a proton gradient across the mitochondrial membrane that is then used for ATP synthesis. The polypeptide is Cytochrome b (MT-CYB) (Necromys amoenus (Pleasant bolo mouse)).